Consider the following 439-residue polypeptide: Fibulin-7 (439 aa).

The N-terminal stretch at 1–24 (MVPSSPRALFLLLLILACPEPRAS) is a signal peptide. A coiled-coil region spans residues 28–53 (LSKQQLLSAIRQLQQLLKGQETRFAE). A Sushi domain is found at 79–136 (VSCPALNTPADGRKFGSKYLVDHEVHFTCNPGFRLVGPSSVVCLPNGTWTGEQPHCRG). Intrachain disulfides connect C81/C121, C107/C134, C140/C151, C145/C160, C162/C171, C228/C244, C240/C253, C255/C268, C274/C287, C281/C296, and C301/C318. N124 carries N-linked (GlcNAc...) asparagine glycosylation. The EGF-like 1; calcium-binding domain occupies 136-172 (GISECSSQPCQNGGTCVEGVNQYRCICPPGRTGNRCQ). One can recognise an EGF-like 2; calcium-binding domain in the interval 224 to 269 (DVNECELYGQEGRPRLCMHACVNTPGSYRCTCPGGYRTLADGKSCE). Residues 270–319 (DVDECVGLQPVCPQGTTCINTGGSFQCVSPECPEGSGNVSYVKTSPFQCE) form the EGF-like 3; calcium-binding domain. Residue N307 is glycosylated (N-linked (GlcNAc...) asparagine).

This sequence belongs to the fibulin family. Interacts with heparin, FBLN1, FN1 and DSPP. Preferentially binds dental mesenchyme cells and odontoblasts but not dental epithelial cells or nondental cells. Binding requires a heparan sulfate-containing receptor on the cell surface as well as an integrin. Post-translationally, N-glycosylated.

It localises to the secreted. Its subcellular location is the extracellular space. It is found in the extracellular matrix. An adhesion molecule that interacts with extracellular matrix molecules in developing teeth and may play important roles in differentiation and maintenance of odontoblasts as well as in dentin formation. The protein is Fibulin-7 (FBLN7) of Homo sapiens (Human).